The chain runs to 245 residues: DNA repair protein RecO (245 aa).

This sequence belongs to the RecO family.

Its function is as follows. Involved in DNA repair and RecF pathway recombination. The protein is DNA repair protein RecO of Porphyromonas gingivalis (strain ATCC 33277 / DSM 20709 / CIP 103683 / JCM 12257 / NCTC 11834 / 2561).